The following is a 148-amino-acid chain: UPF0260 protein Sfri_1740 (148 aa).

It belongs to the UPF0260 family.

This chain is UPF0260 protein Sfri_1740, found in Shewanella frigidimarina (strain NCIMB 400).